A 250-amino-acid polypeptide reads, in one-letter code: DNA repair protein RecO (250 aa).

This sequence belongs to the RecO family.

Involved in DNA repair and RecF pathway recombination. The chain is DNA repair protein RecO from Syntrophobacter fumaroxidans (strain DSM 10017 / MPOB).